A 39-amino-acid polypeptide reads, in one-letter code: Photosystem II reaction center protein L (39 aa).

A helical transmembrane segment spans residues 18–38; it reads SLYLGLLLVFVMGILFSSYFF.

This sequence belongs to the PsbL family. As to quaternary structure, PSII is composed of 1 copy each of membrane proteins PsbA, PsbB, PsbC, PsbD, PsbE, PsbF, PsbH, PsbI, PsbJ, PsbK, PsbL, PsbM, PsbT, PsbX, PsbY, Psb30/Ycf12, peripheral proteins PsbO, CyanoQ (PsbQ), PsbU, PsbV and a large number of cofactors. It forms dimeric complexes.

The protein localises to the cellular thylakoid membrane. Its function is as follows. One of the components of the core complex of photosystem II (PSII). PSII is a light-driven water:plastoquinone oxidoreductase that uses light energy to abstract electrons from H(2)O, generating O(2) and a proton gradient subsequently used for ATP formation. It consists of a core antenna complex that captures photons, and an electron transfer chain that converts photonic excitation into a charge separation. This subunit is found at the monomer-monomer interface and is required for correct PSII assembly and/or dimerization. The protein is Photosystem II reaction center protein L of Prochlorococcus marinus (strain NATL2A).